The primary structure comprises 128 residues: Infection structure-specific protein 56 (128 aa).

Polar residues-rich tracts occupy residues 27–36 (HATYPQSQPH) and 87–101 (TSIS…DSQS). 2 disordered regions span residues 27–48 (HATY…AVPS) and 86–128 (GTSI…STSA). Over residues 115–128 (KDAKKELKDPSTSA) the composition is skewed to basic and acidic residues.

General role in the development of germlings including formation of the infection structures. This chain is Infection structure-specific protein 56 (INF56), found in Uromyces appendiculatus (Rust fungus).